Reading from the N-terminus, the 114-residue chain is MSETATLPLRFTDSAASKVKNLIADEENPNLKLRVYITGGGCSGFQYGFTFDDKVNEDDFTIEKQGVALVVDPMSLQYLVGGSVDYSEGLEGSRFIVTNPNAKTTCGCGSSFSI.

Residues Cys-42, Cys-106, and Cys-108 each coordinate iron-sulfur cluster.

Belongs to the HesB/IscA family. Homodimer. It depends on iron-sulfur cluster as a cofactor.

In terms of biological role, required for insertion of 4Fe-4S clusters for at least IspG. This is Iron-sulfur cluster insertion protein ErpA from Sodalis glossinidius (strain morsitans).